A 273-amino-acid polypeptide reads, in one-letter code: Putative pyruvate, phosphate dikinase regulatory protein (273 aa).

149–156 (GPSRTSKT) is an ADP binding site.

Belongs to the pyruvate, phosphate/water dikinase regulatory protein family. PDRP subfamily.

The catalysed reaction is N(tele)-phospho-L-histidyl/L-threonyl-[pyruvate, phosphate dikinase] + ADP = N(tele)-phospho-L-histidyl/O-phospho-L-threonyl-[pyruvate, phosphate dikinase] + AMP + H(+). The enzyme catalyses N(tele)-phospho-L-histidyl/O-phospho-L-threonyl-[pyruvate, phosphate dikinase] + phosphate + H(+) = N(tele)-phospho-L-histidyl/L-threonyl-[pyruvate, phosphate dikinase] + diphosphate. Its function is as follows. Bifunctional serine/threonine kinase and phosphorylase involved in the regulation of the pyruvate, phosphate dikinase (PPDK) by catalyzing its phosphorylation/dephosphorylation. This chain is Putative pyruvate, phosphate dikinase regulatory protein, found in Rickettsia rickettsii (strain Iowa).